Reading from the N-terminus, the 922-residue chain is Translation initiation factor IF-2 (922 aa).

A disordered region spans residues 243–329 (AAREAAKLAE…GKSKSGQEET (87 aa)). Residues 250-264 (LAEAQKAAAPAPAAP) show a composition bias toward low complexity. The span at 267–298 (KTLHKPDKPAAAKGAKGPDKKPAGAWKDDAAR) shows a compositional bias: basic and acidic residues. The tr-type G domain occupies 422-589 (ARPPVVTVMG…AILLQAEVLE (168 aa)). The G1 stretch occupies residues 431–438 (GHVDHGKT). 431–438 (GHVDHGKT) is a binding site for GTP. The segment at 456 to 460 (GITQH) is G2. Residues 477–480 (DTPG) form a G3 region. GTP is bound by residues 477 to 481 (DTPGH) and 531 to 534 (NKID). Residues 531–534 (NKID) form a G4 region. A G5 region spans residues 567–569 (SAK).

Belongs to the TRAFAC class translation factor GTPase superfamily. Classic translation factor GTPase family. IF-2 subfamily.

The protein localises to the cytoplasm. Functionally, one of the essential components for the initiation of protein synthesis. Protects formylmethionyl-tRNA from spontaneous hydrolysis and promotes its binding to the 30S ribosomal subunits. Also involved in the hydrolysis of GTP during the formation of the 70S ribosomal complex. The polypeptide is Translation initiation factor IF-2 (Thiobacillus denitrificans (strain ATCC 25259 / T1)).